Here is a 40-residue protein sequence, read N- to C-terminus: Photosystem II reaction center protein J (40 aa).

The helical transmembrane segment at 8 to 28 (IPLWIIGTVTGIIVIGLIGIF) threads the bilayer.

This sequence belongs to the PsbJ family. In terms of assembly, PSII is composed of 1 copy each of membrane proteins PsbA, PsbB, PsbC, PsbD, PsbE, PsbF, PsbH, PsbI, PsbJ, PsbK, PsbL, PsbM, PsbT, PsbX, PsbY, PsbZ, Psb30/Ycf12, at least 3 peripheral proteins of the oxygen-evolving complex and a large number of cofactors. It forms dimeric complexes.

It is found in the plastid. The protein localises to the chloroplast thylakoid membrane. In terms of biological role, one of the components of the core complex of photosystem II (PSII). PSII is a light-driven water:plastoquinone oxidoreductase that uses light energy to abstract electrons from H(2)O, generating O(2) and a proton gradient subsequently used for ATP formation. It consists of a core antenna complex that captures photons, and an electron transfer chain that converts photonic excitation into a charge separation. This is Photosystem II reaction center protein J from Morus indica (Mulberry).